The sequence spans 540 residues: GMP synthase [glutamine-hydrolyzing] (540 aa).

A Glutamine amidotransferase type-1 domain is found at 26 to 216 (IIIILDFGSQ…VYHICECEPT (191 aa)). The active-site Nucleophile is C103. Catalysis depends on residues H190 and E192. The 199-residue stretch at 217 to 415 (WTTAAFVEEA…VGLPEEIVQR (199 aa)) folds into the GMPS ATP-PPase domain. 244-250 (SGGVDSS) serves as a coordination point for ATP.

In terms of assembly, homodimer.

The enzyme catalyses XMP + L-glutamine + ATP + H2O = GMP + L-glutamate + AMP + diphosphate + 2 H(+). It participates in purine metabolism; GMP biosynthesis; GMP from XMP (L-Gln route): step 1/1. Functionally, catalyzes the synthesis of GMP from XMP. The protein is GMP synthase [glutamine-hydrolyzing] of Trichormus variabilis (strain ATCC 29413 / PCC 7937) (Anabaena variabilis).